Consider the following 221-residue polypeptide: Uracil-DNA glycosylase (221 aa).

The active-site Proton acceptor is the D65.

This sequence belongs to the uracil-DNA glycosylase (UDG) superfamily. UNG family.

Its subcellular location is the cytoplasm. The enzyme catalyses Hydrolyzes single-stranded DNA or mismatched double-stranded DNA and polynucleotides, releasing free uracil.. In terms of biological role, excises uracil residues from the DNA which can arise as a result of misincorporation of dUMP residues by DNA polymerase or due to deamination of cytosine. The sequence is that of Uracil-DNA glycosylase from Flavobacterium johnsoniae (strain ATCC 17061 / DSM 2064 / JCM 8514 / BCRC 14874 / CCUG 350202 / NBRC 14942 / NCIMB 11054 / UW101) (Cytophaga johnsonae).